A 1051-amino-acid polypeptide reads, in one-letter code: Protein ALWAYS EARLY 2 (1051 aa).

2 stretches are compositionally biased toward basic residues: residues 1 to 11 (MAPVRKSRSVN) and 27 to 36 (SKKNKLRKKL). The segment at 1–37 (MAPVRKSRSVNKRFTNETSPRKDAGKSKKNKLRKKLS) is disordered. The 55-residue stretch at 39–93 (KLGPQWTRLELERFYDAYRKHGQEWRRVAAAIRNSRSVDMVEALFNMNRAYLSLP) folds into the SANT domain. 6 disordered regions span residues 114 to 158 (EGSG…IGSP), 170 to 210 (ANGT…RKQF), 225 to 293 (TDAS…KDTT), 323 to 375 (AECN…TSGA), 397 to 605 (SELS…SSRS), and 948 to 981 (SIEHHHNPSPSNGSEPVANNDLNSQDGSEKNAQM). A compositionally biased stretch (basic and acidic residues) spans 120-130 (GEGHDASEVPR). The span at 131-140 (KQQKRKRAKP) shows a compositional bias: basic residues. Over residues 279–293 (ESSRERKLDSDKDTT) the composition is skewed to basic and acidic residues. Over residues 323 to 332 (AECNDSDDNG) the composition is skewed to acidic residues. 2 stretches are compositionally biased toward basic and acidic residues: residues 350–372 (AAIEASREKYSPRSPKKRDDKHT) and 403–417 (LKEERTEYDMDEKSS). Residues 560-574 (KQVSDSGPTSLSQKP) are compositionally biased toward polar residues. Over residues 586–597 (LQEKAKSSETTH) the composition is skewed to basic and acidic residues. Over residues 967–981 (NDLNSQDGSEKNAQM) the composition is skewed to polar residues.

Interacts with SNL1 (via PAH3). As to expression, expressed ubiquitously in vegetative and reproductive tissues.

It is found in the nucleus. This chain is Protein ALWAYS EARLY 2 (ALY2), found in Arabidopsis thaliana (Mouse-ear cress).